A 378-amino-acid polypeptide reads, in one-letter code: tRNA-specific 2-thiouridylase MnmA (378 aa).

ATP contacts are provided by residues 9–16 and Met35; that span reads GVSGGVDS. The segment at 94 to 96 is interaction with target base in tRNA; the sequence is NPD. Cys99 functions as the Nucleophile in the catalytic mechanism. Cys99 and Cys195 form a disulfide bridge. An ATP-binding site is contributed by Gly123. An interaction with tRNA region spans residues 145 to 147; the sequence is KDQ. Cys195 functions as the Cysteine persulfide intermediate in the catalytic mechanism. Residues 307 to 308 form an interaction with tRNA region; the sequence is RY.

It belongs to the MnmA/TRMU family.

Its subcellular location is the cytoplasm. The enzyme catalyses S-sulfanyl-L-cysteinyl-[protein] + uridine(34) in tRNA + AH2 + ATP = 2-thiouridine(34) in tRNA + L-cysteinyl-[protein] + A + AMP + diphosphate + H(+). Functionally, catalyzes the 2-thiolation of uridine at the wobble position (U34) of tRNA, leading to the formation of s(2)U34. The polypeptide is tRNA-specific 2-thiouridylase MnmA (Xanthomonas axonopodis pv. citri (strain 306)).